Reading from the N-terminus, the 920-residue chain is MKEYKDTLNLNTTTFSMKGNLSVNEPKTYAKWQEQQAFKRMQNRKDNHGDFTLHDGPPYANGHLHLGHALNKILKDIVVKREYFKGNKIYYTPGWDCHGLPIEQQILERLEKEKTSLENPTLFREKCRDHAKKFLEIQKNEFLQLGVLGDFEDPYKTMDFKFEASIYRALVEVAKKGLLKERHKPIYWSYACESALAEAEVEYKMKKSPSIFVAFGLKKESLEKLKVKKASLVIWTTTPWTLYANVAIALKKDAVYALTQKGYLVAKALHEKLAALGVVDSEIVHEFNSNDLEYLKATNPLNQRDSLITLGEHVGLEDGTGAVHTAPGHGEEDYYLGLRYNLEVLMSVDERGCYDEGIIHNQLLDESYLGEHVFKAQKRIIEQLGDSLLLEQEIEHSYPHCWRTHKPVIYRATTQWFILMDEPFIQNDGSQKTLREVALNAIEKVEFVPNSGKNRLKTMIENRPDWCLSRQRKWGVPLAFFIDKRTNKPCFESEVLEHVANLFEKKGCDVWWEYSVKDLLPPSYQEDAMHYEKVMHILDVWFDSGSTFKAVLEDYHGEKGQSPSDVILEGSDQHRGWFQSSLLIGCILNNQAPFKKVITHGFIVDEKGEKMSKSKGNVVSLDNLLKKHGSDVVRLWVAFNDYQNDLRVSQTFFIQTEQHYKKFRNTLKFLLANFSDMDLKNLERSHDFSPLDHFILEALETTSTGVNSAFEEHDFVKGLNILMAFVTNELSGIYLDACKDSLYCDSKNNEKRQAIQMVLLAIASKLCYFLAPILTHTIEEVLEHSQVLCAFLQAKDVFDLKGISVSEKLHLKEFKKPENFEAVLALRSAFNEELDRLKKESVVKNSLECAIEVKEKALRENLIEELLMVSFVGVAKEKLSETPAFTLFKAPFYKCPRCWRFKSELENTPCKRCEEVLKER.

The 'HIGH' region signature appears at 58-68; the sequence is PYANGHLHLGH. L-isoleucyl-5'-AMP is bound at residue glutamate 569. Residues 610-614 carry the 'KMSKS' region motif; sequence KMSKS. Lysine 613 contacts ATP. Zn(2+) contacts are provided by cysteine 895, cysteine 898, cysteine 910, and cysteine 913.

The protein belongs to the class-I aminoacyl-tRNA synthetase family. IleS type 1 subfamily. Monomer. Requires Zn(2+) as cofactor.

It is found in the cytoplasm. The enzyme catalyses tRNA(Ile) + L-isoleucine + ATP = L-isoleucyl-tRNA(Ile) + AMP + diphosphate. Functionally, catalyzes the attachment of isoleucine to tRNA(Ile). As IleRS can inadvertently accommodate and process structurally similar amino acids such as valine, to avoid such errors it has two additional distinct tRNA(Ile)-dependent editing activities. One activity is designated as 'pretransfer' editing and involves the hydrolysis of activated Val-AMP. The other activity is designated 'posttransfer' editing and involves deacylation of mischarged Val-tRNA(Ile). The polypeptide is Isoleucine--tRNA ligase (Helicobacter pylori (strain P12)).